A 389-amino-acid polypeptide reads, in one-letter code: Formate-dependent phosphoribosylglycinamide formyltransferase (389 aa).

Residues 21-22 and Glu-81 each bind N(1)-(5-phospho-beta-D-ribosyl)glycinamide; that span reads EL. Residues Arg-113, Lys-154, 159–164, 194–197, and Glu-202 contribute to the ATP site; these read SSGKGQ and EEFI. The 190-residue stretch at 118-307 folds into the ATP-grasp domain; that stretch reads RLAAEKLGLK…EFEIHVRAIL (190 aa). Mg(2+)-binding residues include Glu-266 and Glu-278. Residues Asp-285, Lys-353, and 360-361 contribute to the N(1)-(5-phospho-beta-D-ribosyl)glycinamide site; that span reads RR.

This sequence belongs to the PurK/PurT family. As to quaternary structure, homodimer.

It catalyses the reaction N(1)-(5-phospho-beta-D-ribosyl)glycinamide + formate + ATP = N(2)-formyl-N(1)-(5-phospho-beta-D-ribosyl)glycinamide + ADP + phosphate + H(+). The protein operates within purine metabolism; IMP biosynthesis via de novo pathway; N(2)-formyl-N(1)-(5-phospho-D-ribosyl)glycinamide from N(1)-(5-phospho-D-ribosyl)glycinamide (formate route): step 1/1. Its function is as follows. Involved in the de novo purine biosynthesis. Catalyzes the transfer of formate to 5-phospho-ribosyl-glycinamide (GAR), producing 5-phospho-ribosyl-N-formylglycinamide (FGAR). Formate is provided by PurU via hydrolysis of 10-formyl-tetrahydrofolate. This Methanocaldococcus jannaschii (strain ATCC 43067 / DSM 2661 / JAL-1 / JCM 10045 / NBRC 100440) (Methanococcus jannaschii) protein is Formate-dependent phosphoribosylglycinamide formyltransferase.